Here is a 917-residue protein sequence, read N- to C-terminus: Protein translocase subunit SecA (917 aa).

ATP contacts are provided by residues glutamine 87, 105–109 (GEGKT), and aspartate 516. Residues cysteine 901, cysteine 903, cysteine 912, and histidine 913 each contribute to the Zn(2+) site.

It belongs to the SecA family. In terms of assembly, monomer and homodimer. Part of the essential Sec protein translocation apparatus which comprises SecA, SecYEG and auxiliary proteins SecDF-YajC and YidC. It depends on Zn(2+) as a cofactor.

The protein resides in the cell inner membrane. It localises to the cytoplasm. It carries out the reaction ATP + H2O + cellular proteinSide 1 = ADP + phosphate + cellular proteinSide 2.. In terms of biological role, part of the Sec protein translocase complex. Interacts with the SecYEG preprotein conducting channel. Has a central role in coupling the hydrolysis of ATP to the transfer of proteins into and across the cell membrane, serving both as a receptor for the preprotein-SecB complex and as an ATP-driven molecular motor driving the stepwise translocation of polypeptide chains across the membrane. This is Protein translocase subunit SecA from Acidovorax ebreus (strain TPSY) (Diaphorobacter sp. (strain TPSY)).